A 567-amino-acid polypeptide reads, in one-letter code: Interferon lambda receptor 1 (567 aa).

An N-terminal signal peptide occupies residues M1–G22. Over Q23–S229 the chain is Extracellular. Positions P26–D121 constitute a Fibronectin type-III domain. N29 carries an N-linked (GlcNAc...) asparagine glycan. 3 disulfide bridges follow: C74/C82, C86/C149, and C193/C215. N-linked (GlcNAc...) asparagine glycosylation is present at N141. The helical transmembrane segment at A230 to L250 threads the bilayer. The Cytoplasmic segment spans residues K251–S567.

This sequence belongs to the type II cytokine receptor family. Heterodimer with IL10RB.

Its subcellular location is the membrane. Its function is as follows. The IFNLR1/IL10RB dimer is a receptor for the cytokine ligands IFNL2 and IFNL3 and mediates their antiviral activity. The ligand/receptor complex stimulate the activation of the JAK/STAT signaling pathway leading to the expression of IFN-stimulated genes (ISG), which contribute to the antiviral state. Determines the cell type specificity of the lambda interferon action. Shows a more restricted pattern of expression in the epithelial tissues thereby limiting responses to lambda interferons primarily to epithelial cells of the respiratory, gastrointestinal, and reproductive tracts. This Gallus gallus (Chicken) protein is Interferon lambda receptor 1 (IFNLR1).